Consider the following 366-residue polypeptide: Flagellar P-ring protein (366 aa).

An N-terminal signal peptide occupies residues 1 to 24 (MWPLLLAVALSTLLPLAMPGSAGA).

Belongs to the FlgI family. In terms of assembly, the basal body constitutes a major portion of the flagellar organelle and consists of four rings (L,P,S, and M) mounted on a central rod.

The protein resides in the periplasm. It localises to the bacterial flagellum basal body. Assembles around the rod to form the L-ring and probably protects the motor/basal body from shearing forces during rotation. The polypeptide is Flagellar P-ring protein (Nitratidesulfovibrio vulgaris (strain ATCC 29579 / DSM 644 / CCUG 34227 / NCIMB 8303 / VKM B-1760 / Hildenborough) (Desulfovibrio vulgaris)).